The following is a 396-amino-acid chain: Putative peptide chain release factor 1, mitochondrial (396 aa).

Residue Q270 is modified to N5-methylglutamine.

The protein belongs to the prokaryotic/mitochondrial release factor family. In terms of processing, methylation of glutamine in the GGQ triplet is conserved from bacteria to mammals.

It is found in the mitochondrion. This Schizosaccharomyces pombe (strain 972 / ATCC 24843) (Fission yeast) protein is Putative peptide chain release factor 1, mitochondrial.